Consider the following 335-residue polypeptide: Glyceraldehyde-3-phosphate dehydrogenase (335 aa).

NAD(+) contacts are provided by residues 10-11 (RI), aspartate 33, arginine 77, and serine 119. D-glyceraldehyde 3-phosphate-binding positions include 150–152 (SCT), threonine 181, 210–211 (TG), and arginine 233. The active-site Nucleophile is cysteine 151. Asparagine 315 is a binding site for NAD(+).

It belongs to the glyceraldehyde-3-phosphate dehydrogenase family. Homotetramer.

Its subcellular location is the cytoplasm. The catalysed reaction is D-glyceraldehyde 3-phosphate + phosphate + NAD(+) = (2R)-3-phospho-glyceroyl phosphate + NADH + H(+). It functions in the pathway carbohydrate degradation; glycolysis; pyruvate from D-glyceraldehyde 3-phosphate: step 1/5. Catalyzes the oxidative phosphorylation of glyceraldehyde 3-phosphate (G3P) to 1,3-bisphosphoglycerate (BPG) using the cofactor NAD. The first reaction step involves the formation of a hemiacetal intermediate between G3P and a cysteine residue, and this hemiacetal intermediate is then oxidized to a thioester, with concomitant reduction of NAD to NADH. The reduced NADH is then exchanged with the second NAD, and the thioester is attacked by a nucleophilic inorganic phosphate to produce BPG. This Chlamydia pneumoniae (Chlamydophila pneumoniae) protein is Glyceraldehyde-3-phosphate dehydrogenase (gap).